The chain runs to 190 residues: ATP synthase subunit b (190 aa).

The chain crosses the membrane as a helical span at residues 24–44 (IVGSLICFVVILFFFWKLVLP).

It belongs to the ATPase B chain family. As to quaternary structure, F-type ATPases have 2 components, F(1) - the catalytic core - and F(0) - the membrane proton channel. F(1) has five subunits: alpha(3), beta(3), gamma(1), delta(1), epsilon(1). F(0) has three main subunits: a(1), b(2) and c(10-14). The alpha and beta chains form an alternating ring which encloses part of the gamma chain. F(1) is attached to F(0) by a central stalk formed by the gamma and epsilon chains, while a peripheral stalk is formed by the delta and b chains.

Its subcellular location is the cell membrane. In terms of biological role, f(1)F(0) ATP synthase produces ATP from ADP in the presence of a proton or sodium gradient. F-type ATPases consist of two structural domains, F(1) containing the extramembraneous catalytic core and F(0) containing the membrane proton channel, linked together by a central stalk and a peripheral stalk. During catalysis, ATP synthesis in the catalytic domain of F(1) is coupled via a rotary mechanism of the central stalk subunits to proton translocation. Functionally, component of the F(0) channel, it forms part of the peripheral stalk, linking F(1) to F(0). The protein is ATP synthase subunit b of Leifsonia xyli subsp. xyli (strain CTCB07).